The primary structure comprises 88 residues: Large ribosomal subunit protein eL15 (88 aa).

This sequence belongs to the eukaryotic ribosomal protein eL15 family.

The polypeptide is Large ribosomal subunit protein eL15 (RPL15) (Brassica napus (Rape)).